We begin with the raw amino-acid sequence, 190 residues long: MTTSATGKALNRKQRRALNRSNRLRKEFQPVIVEPLASGQAVSLKTRTGYCVTQFVSNNPEVKAKEVVSVSVKLPDHLAVEANRALKVGRISILLGLLPTVAGTVKVCLTEKQDSPAESFKRALAVADSSKEVASAFYVDGFKDVSLGDLEKDLSIYLYSEAALAANSIRIRMEVEHVMPKFITRFSPFA.

Positions 1-20 are disordered; that stretch reads MTTSATGKALNRKQRRALNR.

Belongs to the bromovirus capsid protein family.

Its subcellular location is the virion. In terms of biological role, capsid protein. Probably binds RNA and plays a role in packaging. The sequence is that of Capsid protein from Broad bean mottle virus.